The sequence spans 148 residues: MSKHERHNAIRELIAQRPIASQDELRRKLVRRGFDVTQATLSRDIHELRIYKGPGGYALPNGNGHDEQDDLPDVDEVMSSFGLKVKQAQNQLVLVTTAGSAQPVALAIDHEDWPEVVGTLAGDDTVLIICPDQKRATVLAERLEKIIG.

The protein belongs to the ArgR family.

The protein resides in the cytoplasm. The protein operates within amino-acid biosynthesis; L-arginine biosynthesis [regulation]. Functionally, regulates arginine biosynthesis genes. The chain is Arginine repressor from Acidobacterium capsulatum (strain ATCC 51196 / DSM 11244 / BCRC 80197 / JCM 7670 / NBRC 15755 / NCIMB 13165 / 161).